The primary structure comprises 296 residues: Ribosomal RNA small subunit methyltransferase A (296 aa).

Residues asparagine 40, valine 42, glycine 67, glutamate 88, aspartate 118, and asparagine 137 each contribute to the S-adenosyl-L-methionine site.

The protein belongs to the class I-like SAM-binding methyltransferase superfamily. rRNA adenine N(6)-methyltransferase family. RsmA subfamily.

The protein resides in the cytoplasm. The enzyme catalyses adenosine(1518)/adenosine(1519) in 16S rRNA + 4 S-adenosyl-L-methionine = N(6)-dimethyladenosine(1518)/N(6)-dimethyladenosine(1519) in 16S rRNA + 4 S-adenosyl-L-homocysteine + 4 H(+). In terms of biological role, specifically dimethylates two adjacent adenosines (A1518 and A1519) in the loop of a conserved hairpin near the 3'-end of 16S rRNA in the 30S particle. May play a critical role in biogenesis of 30S subunits. The polypeptide is Ribosomal RNA small subunit methyltransferase A (Rhodococcus opacus (strain B4)).